Consider the following 559-residue polypeptide: Intestinal-type alkaline phosphatase (559 aa).

Residues 1 to 19 form the signal peptide; it reads MQGPWVLLLLGLRLQLSLS. Aspartate 61 provides a ligand contact to Mg(2+). Residues aspartate 61 and serine 111 each coordinate Zn(2+). The active-site Phosphoserine intermediate is the serine 111. Cysteine 140 and cysteine 202 are oxidised to a cystine. Residue asparagine 141 is glycosylated (N-linked (GlcNAc...) asparagine). Position 174 (serine 174) interacts with Mg(2+). Glutamate 235 lines the Ca(2+) pocket. Asparagine 241 carries an N-linked (GlcNAc...) asparagine glycan. Residues phenylalanine 288, glutamate 289, and aspartate 304 each coordinate Ca(2+). Glutamate 330 contributes to the Mg(2+) binding site. Residues aspartate 335, histidine 339, aspartate 376, and histidine 377 each contribute to the Zn(2+) site. The N-linked (GlcNAc...) asparagine glycan is linked to asparagine 426. Residue histidine 450 coordinates Zn(2+). Cysteine 485 and cysteine 492 are joined by a disulfide. Residues 496–531 are disordered; that stretch reads PPADESQTTTTTRQTTITTTTTTTTTTTTPVHNSAR. The segment covering 503–524 has biased composition (low complexity); sequence TTTTTRQTTITTTTTTTTTTTT. Residue asparagine 528 is the site of GPI-anchor amidated asparagine attachment. Residues 529–559 constitute a propeptide, removed in mature form; the sequence is SARSLGPATAPLALALLAGMLMLLLGAPAES.

Belongs to the alkaline phosphatase family. Homodimer. It depends on Mg(2+) as a cofactor. Zn(2+) serves as cofactor. Ca(2+) is required as a cofactor. In terms of tissue distribution, intestine and thymus.

It is found in the cell membrane. It catalyses the reaction a phosphate monoester + H2O = an alcohol + phosphate. In terms of biological role, alkaline phosphatase that can hydrolyze various phosphate compounds. The protein is Intestinal-type alkaline phosphatase (Iap) of Mus musculus (Mouse).